A 490-amino-acid polypeptide reads, in one-letter code: tRNA-guanine(15) transglycosylase (490 aa).

The active-site Nucleophile is the D90. Positions 125 and 193 each coordinate substrate. 3 residues coordinate Zn(2+): C276, C278, and C281.

The protein belongs to the archaeosine tRNA-ribosyltransferase family. Zn(2+) is required as a cofactor.

The enzyme catalyses guanosine(15) in tRNA + 7-cyano-7-deazaguanine = 7-cyano-7-carbaguanosine(15) in tRNA + guanine. It participates in tRNA modification; archaeosine-tRNA biosynthesis. Its function is as follows. Exchanges the guanine residue with 7-cyano-7-deazaguanine (preQ0) at position 15 in the dihydrouridine loop (D-loop) of archaeal tRNAs. The protein is tRNA-guanine(15) transglycosylase of Methanosarcina mazei (strain ATCC BAA-159 / DSM 3647 / Goe1 / Go1 / JCM 11833 / OCM 88) (Methanosarcina frisia).